Consider the following 386-residue polypeptide: Histidine decarboxylase (386 aa).

Position 120 (histidine 120) interacts with substrate. At lysine 233 the chain carries N6-(pyridoxal phosphate)lysine.

Belongs to the group II decarboxylase family. As to quaternary structure, homotetramer. Pyridoxal 5'-phosphate serves as cofactor.

The catalysed reaction is L-histidine + H(+) = histamine + CO2. In Vibrio campbellii (strain ATCC BAA-1116), this protein is Histidine decarboxylase.